A 340-amino-acid chain; its full sequence is Ketol-acid reductoisomerase (NADP(+)) (340 aa).

One can recognise a KARI N-terminal Rossmann domain in the interval 3 to 182; it reads VQMEYEKDVK…GAARVGLLET (180 aa). NADP(+) contacts are provided by residues 26 to 29, arginine 49, serine 53, and 83 to 86; these read YGSQ and DEIQ. Histidine 108 is a catalytic residue. Glycine 134 serves as a coordination point for NADP(+). A KARI C-terminal knotted domain is found at 183–328; sequence TYKEETEEDL…AELRKAMPFV (146 aa). Mg(2+) is bound by residues aspartate 191, glutamate 195, glutamate 227, and glutamate 231. Serine 252 is a binding site for substrate.

This sequence belongs to the ketol-acid reductoisomerase family. Mg(2+) is required as a cofactor.

It catalyses the reaction (2R)-2,3-dihydroxy-3-methylbutanoate + NADP(+) = (2S)-2-acetolactate + NADPH + H(+). It carries out the reaction (2R,3R)-2,3-dihydroxy-3-methylpentanoate + NADP(+) = (S)-2-ethyl-2-hydroxy-3-oxobutanoate + NADPH + H(+). Its pathway is amino-acid biosynthesis; L-isoleucine biosynthesis; L-isoleucine from 2-oxobutanoate: step 2/4. The protein operates within amino-acid biosynthesis; L-valine biosynthesis; L-valine from pyruvate: step 2/4. Its function is as follows. Involved in the biosynthesis of branched-chain amino acids (BCAA). Catalyzes an alkyl-migration followed by a ketol-acid reduction of (S)-2-acetolactate (S2AL) to yield (R)-2,3-dihydroxy-isovalerate. In the isomerase reaction, S2AL is rearranged via a Mg-dependent methyl migration to produce 3-hydroxy-3-methyl-2-ketobutyrate (HMKB). In the reductase reaction, this 2-ketoacid undergoes a metal-dependent reduction by NADPH to yield (R)-2,3-dihydroxy-isovalerate. This chain is Ketol-acid reductoisomerase (NADP(+)), found in Streptococcus thermophilus (strain ATCC BAA-491 / LMD-9).